We begin with the raw amino-acid sequence, 494 residues long: Nicotianamine aminotransferase 1 (494 aa).

2 stretches are compositionally biased toward low complexity: residues 24–38 and 48–62; these read SGTS…TSSS and STAM…AASS. Positions 24–76 are disordered; it reads SGTSYPTRTTTTSSSAPEFTNKKQSTAMAPTTAAAAASSNGGGESDGSSKEWR. At lysine 322 the chain carries N6-(pyridoxal phosphate)lysine.

Belongs to the class-I pyridoxal-phosphate-dependent aminotransferase family. Pyridoxal 5'-phosphate serves as cofactor. As to expression, expressed in companion and pericycle cells adjacent to the protoxylem of roots. Expressed in companion cells of shoots.

It catalyses the reaction nicotianamine + 2-oxoglutarate = 3''-deamino-3''-oxonicotianamine + L-glutamate. Involved in biosynthesis of mugineic acid family phytosiderophores, which are ferric iron chelators produced in graminaceous plants in response to iron deficiency. In Oryza sativa subsp. japonica (Rice), this protein is Nicotianamine aminotransferase 1.